A 312-amino-acid chain; its full sequence is Taste receptor type 2 member 9 (312 aa).

Residues 1–9 (MPSAIEAIY) are Extracellular-facing. A helical transmembrane segment spans residues 10-32 (IILIAGELTIGIWGNGFIVLVNC). The Cytoplasmic portion of the chain corresponds to 33-52 (IDWLKRRDVSLIDIILISLA). The helical transmembrane segment at 53-72 (ISRICLLXVISLDGFFMLLF) threads the bilayer. Over 73-86 (PTTYGNSVLVSIVB) the chain is Extracellular. Residues 87–109 (IVWTFANNSSLWFTSCLSIFYLL) form a helical membrane-spanning segment. Over 110 to 128 (KIANISHPFFFWLKLKINK) the chain is Cytoplasmic. The helical transmembrane segment at 129 to 146 (VILAILLGSFLISLVISV) threads the bilayer. Over 147-180 (XMNDDMWYHLFKVSHEENITWEFKVSKIPGTFKQ) the chain is Extracellular. The N-linked (GlcNAc...) asparagine glycan is linked to N164. The chain crosses the membrane as a helical span at residues 181–203 (LTLNLGAMVPFILCLISFSLLLF). Residues 204-234 (SLVRHTKQIQLXATGFRDPSTEAHMRAIKAV) lie on the Cytoplasmic side of the membrane. Residues 235-257 (IIFLLLLIVYYPVFLVMTSSALI) form a helical membrane-spanning segment. Topologically, residues 258-261 (PQGK) are extracellular. The chain crosses the membrane as a helical span at residues 262–284 (LVLMIGDIVTITFPSSHSFILIM). The Cytoplasmic segment spans residues 285–312 (GNSKLREAFLKMLRFVKRFLRRRKPFVP).

Belongs to the G-protein coupled receptor T2R family.

It is found in the membrane. Its function is as follows. Gustducin-coupled receptor implicated in the perception of bitter compounds in the oral cavity and the gastrointestinal tract. Signals through PLCB2 and the calcium-regulated cation channel TRPM5. The protein is Taste receptor type 2 member 9 (TAS2R9) of Pongo pygmaeus (Bornean orangutan).